The primary structure comprises 314 residues: uncharacterized protein (314 aa).

The tract at residues 39-146 (QENVDSDSTD…SDYSSDESNS (108 aa)) is disordered. Positions 56–76 (STKNVSRNIPKNIPKSISKNI) are enriched in polar residues. Residues 88–131 (IPKNVSKNIPKNVPKNVSKNIPKNIPKNVPNKSRNKYSNYSEDS) show a composition bias toward low complexity. Residues 132–141 (NYSEDSDYSS) show a composition bias toward acidic residues.

This is an uncharacterized protein from Acanthamoeba polyphaga mimivirus (APMV).